Here is a 389-residue protein sequence, read N- to C-terminus: Phospho-N-acetylmuramoyl-pentapeptide-transferase (389 aa).

10 helical membrane passes run 25–45 (RAVM…PWVI), 73–93 (TMGG…WGDL), 97–117 (FIWI…VDDY), 135–155 (FWQS…VSEA), 190–210 (ISYP…IVGA), 222–242 (GLVI…AYVM), 258–278 (GAGE…AFLW), 286–306 (VFMG…VAVI), 311–331 (IVLF…MLQV), and 366–386 (QVVV…LSTL).

The protein belongs to the glycosyltransferase 4 family. MraY subfamily. Mg(2+) serves as cofactor.

It is found in the cell inner membrane. It catalyses the reaction UDP-N-acetyl-alpha-D-muramoyl-L-alanyl-gamma-D-glutamyl-meso-2,6-diaminopimeloyl-D-alanyl-D-alanine + di-trans,octa-cis-undecaprenyl phosphate = di-trans,octa-cis-undecaprenyl diphospho-N-acetyl-alpha-D-muramoyl-L-alanyl-D-glutamyl-meso-2,6-diaminopimeloyl-D-alanyl-D-alanine + UMP. It participates in cell wall biogenesis; peptidoglycan biosynthesis. Its function is as follows. Catalyzes the initial step of the lipid cycle reactions in the biosynthesis of the cell wall peptidoglycan: transfers peptidoglycan precursor phospho-MurNAc-pentapeptide from UDP-MurNAc-pentapeptide onto the lipid carrier undecaprenyl phosphate, yielding undecaprenyl-pyrophosphoryl-MurNAc-pentapeptide, known as lipid I. The protein is Phospho-N-acetylmuramoyl-pentapeptide-transferase of Burkholderia multivorans (strain ATCC 17616 / 249).